A 2725-amino-acid chain; its full sequence is Teneurin-1 (2725 aa).

A disordered region spans residues 1 to 48 (MEQTDCKPYQPLPKVKHEMDLAYTSSSDESEDGRKPRQSYNSRETLHE). One can recognise a Teneurin N-terminal domain in the interval 1–318 (MEQTDCKPYQ…KPYRCCNWKC (318 aa)). Residues 1-324 (MEQTDCKPYQ…NWKCTALSAT (324 aa)) are Cytoplasmic-facing. The Nuclear localization signal (NLS) signature appears at 62–65 (RKRK). A Phosphoserine modification is found at Ser-105. Thr-109 bears the Phosphothreonine mark. The residue at position 116 (Ser-116) is a Phosphoserine. Residues 174–189 (AGSTQDVQSSPHNQFT) show a composition bias toward polar residues. A disordered region spans residues 174–241 (AGSTQDVQSS…PAPPTSTQDS (68 aa)). Pro residues predominate over residues 192–201 (PLPPPPPPPH). The short motif at 290 to 297 (PPPRPLPR) is the Required for interaction with SORBS1 (Ten-1 ICD form) element. A helical transmembrane segment spans residues 325–345 (AITVTLALLLAYVIAVHLFGL). Residues 346–2725 (TWQLQPVEGE…FMRQSEIGRR (2380 aa)) lie on the Extracellular side of the membrane. Asn-433 carries N-linked (GlcNAc...) asparagine glycosylation. EGF-like domains are found at residues 528–559 (IMDD…PDCA), 560–591 (RDSC…ECDV), 592–624 (PEEQ…EICE), 625–657 (EEDC…NCET), 658–691 (PLPV…SDCS), 692–721 (TELC…GPTC), 722–753 (EERS…DHCT), and 761–796 (VRDG…TGCN). Intrachain disulfides connect Cys-532–Cys-542, Cys-536–Cys-547, Cys-549–Cys-558, Cys-567–Cys-578, Cys-580–Cys-589, Cys-596–Cys-607, Cys-601–Cys-612, Cys-614–Cys-623, Cys-628–Cys-639, Cys-633–Cys-644, Cys-646–Cys-655, Cys-666–Cys-679, Cys-681–Cys-690, Cys-695–Cys-705, Cys-699–Cys-710, Cys-712–Cys-721, Cys-726–Cys-736, Cys-730–Cys-741, Cys-743–Cys-752, Cys-765–Cys-775, Cys-769–Cys-784, and Cys-786–Cys-795. Residues Asn-905 and Asn-1084 are each glycosylated (N-linked (GlcNAc...) asparagine). NHL repeat units lie at residues 1194-1219 (LFAP…VRRI), 1292-1336 (SHCG…NAVI), 1351-1402 (LSCD…IAGR), 1414-1458 (FLVS…VTTN), and 1481-1524 (CFSG…ISRN). The YD 1 repeat unit spans residues 1534–1553 (YEIASPADQELYQFTVNGTH). N-linked (GlcNAc...) asparagine glycosylation is found at Asn-1550 and Asn-1567. YD repeat units follow at residues 1570-1590 (YNSE…VHIR), 1608-1632 (YWLT…ALMT), 1633-1654 (YPGN…TVYE), and 1655-1675 (YDPE…SSFH). N-linked (GlcNAc...) asparagine glycosylation is found at Asn-1663, Asn-1699, Asn-1757, Asn-1781, and Asn-1842. 11 YD repeats span residues 1845-1864 (YSPS…EKME), 1865-1885 (YDQS…WSYT), 1886-1904 (YLEK…YIFE), 1905-1925 (YDQP…HSLQ), 1933-1949 (YRNI…FIQD), 1950-1969 (YSRD…RRVL), 1970-1989 (YKYT…TQVT), 1992-2012 (YEES…FICT), 2015-2035 (YRQT…EGLV), 2085-2105 (YDLN…FSAN), and 2113-2133 (YEIL…VGRM). An N-linked (GlcNAc...) asparagine glycan is attached at Asn-2145. YD repeat units lie at residues 2153 to 2173 (YDAD…WRYS), 2174 to 2194 (YDLN…LTPL), 2196 to 2216 (YDLR…DEDG), 2228 to 2248 (YNSN…TVQY), and 2250 to 2270 (YDGL…LQFF). Asn-2285 is a glycosylation site (N-linked (GlcNAc...) asparagine). YD repeat units lie at residues 2296–2313 (YDLQ…GEEY) and 2314–2337 (YVAC…IKEI). Ser-2580 is modified (phosphoserine). An N-linked (GlcNAc...) asparagine glycan is attached at Asn-2602.

It belongs to the tenascin family. Teneurin subfamily. Homodimer; disulfide-linked. Heterodimer with either TENM2 or TENM3. May also form heterodimer with TENM4. Ten-1 ICD interacts with SORBS1 (via third SH3 domain). Interacts with MBD1. Ten-1 ICD interacts with HINT1. In terms of processing, derives from the plasma membrane form by proteolytic processing. Further proteolytic cleavage may be generated. In terms of tissue distribution, expressed in fetal brain.

The protein localises to the cell membrane. It is found in the nucleus. It localises to the nucleus speckle. The protein resides in the nucleus matrix. Its subcellular location is the cytoplasm. The protein localises to the cytoskeleton. In terms of biological role, involved in neural development, regulating the establishment of proper connectivity within the nervous system. May function as a cellular signal transducer. Its function is as follows. Plays a role in the regulation of neuroplasticity in the limbic system. Mediates a rapid reorganization of actin- and tubulin-based cytoskeleton elements with an increase in dendritic arborization and spine density formation of neurons in the hippocampus and amygdala. Induces BDNF transcription inhibition in neurons. Activates the mitogen-activated protein (MAP) kinase 2 (MEK2) and extracellular signal-regulated kinase (ERK) cascade. Also acts as a bioactive neuroprotective peptide on limbic neurons of the brain and regulates stress-induced behavior: attenuates alkalosis-associated necrotic cell death and the effects of corticotropin-releasing factor (CRF) on c-fos/FOS induction and on the reinstatement of cocaine seeking. Functionally, induces gene transcription activation. In Homo sapiens (Human), this protein is Teneurin-1 (TENM1).